A 209-amino-acid chain; its full sequence is Large ribosomal subunit protein uL3 (209 aa).

The interval 133–153 (THGNSLSHRVPGSIGQNQTPG) is disordered. Gln-150 bears the N5-methylglutamine mark.

The protein belongs to the universal ribosomal protein uL3 family. Part of the 50S ribosomal subunit. Forms a cluster with proteins L14 and L19. Post-translationally, methylated by PrmB.

One of the primary rRNA binding proteins, it binds directly near the 3'-end of the 23S rRNA, where it nucleates assembly of the 50S subunit. In Pectobacterium carotovorum subsp. carotovorum (strain PC1), this protein is Large ribosomal subunit protein uL3.